Reading from the N-terminus, the 120-residue chain is rRNA-processing protein CGR1 (120 aa).

Disordered regions lie at residues 1 to 26 (MVNETGESQKAAKGTPVSGKVWKAEK) and 81 to 120 (ERREKKEENERYERLAAKMHAKKVERMRRREKRNKALKER). Positions 47–106 (KKQKRLEDKQFKERLKALKDEKEEARQAKITMLKERREKKEENERYERLAAKMHAKKVER) form a coiled coil. Basic and acidic residues predominate over residues 81–96 (ERREKKEENERYERLA). Residues 97 to 113 (AKMHAKKVERMRRREKR) are compositionally biased toward basic residues.

It belongs to the CGR1 family.

The protein resides in the nucleus. The protein localises to the nucleolus. Functionally, involved in nucleolar integrity and required for processing of the pre-rRNA for the 60S ribosome subunit. This Saccharomyces cerevisiae (strain ATCC 204508 / S288c) (Baker's yeast) protein is rRNA-processing protein CGR1 (CGR1).